The sequence spans 436 residues: Ribosomal protein uS12 methylthiotransferase RimO (436 aa).

Residues 2–117 (KNVGIISLGC…IAEVIEKIEK (116 aa)) form the MTTase N-terminal domain. Cysteine 11, cysteine 47, cysteine 80, cysteine 154, cysteine 158, and cysteine 161 together coordinate [4Fe-4S] cluster. One can recognise a Radical SAM core domain in the interval 140-369 (TTPNYYAYLK…MEIQKEISYQ (230 aa)). The TRAM domain occupies 372 to 436 (LSKVGKQLEV…AYEYDLVGEY (65 aa)).

It belongs to the methylthiotransferase family. RimO subfamily. [4Fe-4S] cluster serves as cofactor.

The protein resides in the cytoplasm. The catalysed reaction is L-aspartate(89)-[ribosomal protein uS12]-hydrogen + (sulfur carrier)-SH + AH2 + 2 S-adenosyl-L-methionine = 3-methylsulfanyl-L-aspartate(89)-[ribosomal protein uS12]-hydrogen + (sulfur carrier)-H + 5'-deoxyadenosine + L-methionine + A + S-adenosyl-L-homocysteine + 2 H(+). Its function is as follows. Catalyzes the methylthiolation of an aspartic acid residue of ribosomal protein uS12. The sequence is that of Ribosomal protein uS12 methylthiotransferase RimO from Thermoanaerobacter sp. (strain X514).